The chain runs to 424 residues: UPF0229 protein PputGB1_0427 (424 aa).

The segment at 81 to 107 (EFTAGEHIPRPQGGGGGGGGRGKAGNS) is disordered. Positions 92 to 107 (QGGGGGGGGRGKAGNS) are enriched in gly residues.

This sequence belongs to the UPF0229 family.

The protein is UPF0229 protein PputGB1_0427 of Pseudomonas putida (strain GB-1).